The sequence spans 136 residues: Aspartate 1-decarboxylase (136 aa).

The active-site Schiff-base intermediate with substrate; via pyruvic acid is the serine 25. The residue at position 25 (serine 25) is a Pyruvic acid (Ser). A substrate-binding site is contributed by threonine 57. The active-site Proton donor is the tyrosine 58. Position 73–75 (73–75 (GAA)) interacts with substrate.

The protein belongs to the PanD family. In terms of assembly, heterooctamer of four alpha and four beta subunits. It depends on pyruvate as a cofactor. Post-translationally, is synthesized initially as an inactive proenzyme, which is activated by self-cleavage at a specific serine bond to produce a beta-subunit with a hydroxyl group at its C-terminus and an alpha-subunit with a pyruvoyl group at its N-terminus.

It localises to the cytoplasm. The enzyme catalyses L-aspartate + H(+) = beta-alanine + CO2. It functions in the pathway cofactor biosynthesis; (R)-pantothenate biosynthesis; beta-alanine from L-aspartate: step 1/1. Functionally, catalyzes the pyruvoyl-dependent decarboxylation of aspartate to produce beta-alanine. The protein is Aspartate 1-decarboxylase of Mycolicibacterium smegmatis (strain ATCC 700084 / mc(2)155) (Mycobacterium smegmatis).